The primary structure comprises 378 residues: Glutamate 5-kinase (378 aa).

Lys14 provides a ligand contact to ATP. The substrate site is built by Ser54, Asp141, and Asn153. ATP is bound at residue Ser173–Asp174. Residues Ala279–Asp356 form the PUA domain.

It belongs to the glutamate 5-kinase family.

Its subcellular location is the cytoplasm. The enzyme catalyses L-glutamate + ATP = L-glutamyl 5-phosphate + ADP. The protein operates within amino-acid biosynthesis; L-proline biosynthesis; L-glutamate 5-semialdehyde from L-glutamate: step 1/2. Its function is as follows. Catalyzes the transfer of a phosphate group to glutamate to form L-glutamate 5-phosphate. The protein is Glutamate 5-kinase of Brucella abortus (strain S19).